The primary structure comprises 583 residues: Aspartate--tRNA ligase (583 aa).

An L-aspartate-binding site is contributed by Glu173. Residues 197–200 (QLFK) are aspartate. Arg219 provides a ligand contact to L-aspartate. Residues 219-221 (RDE) and Gln228 contribute to the ATP site. An L-aspartate-binding site is contributed by His444. Glu478 is a binding site for ATP. L-aspartate is bound at residue Arg485. An ATP-binding site is contributed by 530–533 (GLDR).

Belongs to the class-II aminoacyl-tRNA synthetase family. Type 1 subfamily. In terms of assembly, homodimer.

The protein resides in the cytoplasm. It catalyses the reaction tRNA(Asp) + L-aspartate + ATP = L-aspartyl-tRNA(Asp) + AMP + diphosphate. In terms of biological role, catalyzes the attachment of L-aspartate to tRNA(Asp) in a two-step reaction: L-aspartate is first activated by ATP to form Asp-AMP and then transferred to the acceptor end of tRNA(Asp). The sequence is that of Aspartate--tRNA ligase from Azobacteroides pseudotrichonymphae genomovar. CFP2.